The primary structure comprises 151 residues: Large ribosomal subunit protein bL9 (151 aa).

It belongs to the bacterial ribosomal protein bL9 family.

Functionally, binds to the 23S rRNA. The protein is Large ribosomal subunit protein bL9 of Azoarcus sp. (strain BH72).